Here is a 73-residue protein sequence, read N- to C-terminus: MARITVEDCMERVSNRFLLVQMAIKRVKQFREGYEPLVPSKNKEIVTALREIAAAKVVPEDELSAAAAENRAE.

It belongs to the RNA polymerase subunit omega family. The RNAP catalytic core consists of 2 alpha, 1 beta, 1 beta' and 1 omega subunit. When a sigma factor is associated with the core the holoenzyme is formed, which can initiate transcription.

It carries out the reaction RNA(n) + a ribonucleoside 5'-triphosphate = RNA(n+1) + diphosphate. Functionally, promotes RNA polymerase assembly. Latches the N- and C-terminal regions of the beta' subunit thereby facilitating its interaction with the beta and alpha subunits. In Oleidesulfovibrio alaskensis (strain ATCC BAA-1058 / DSM 17464 / G20) (Desulfovibrio alaskensis), this protein is DNA-directed RNA polymerase subunit omega.